A 619-amino-acid polypeptide reads, in one-letter code: P-granule-associated protein deps-1 (619 aa).

Residues 62 to 101 form a required for prg-1 binding region; that stretch reads NFDNIEEAKNLERRSKIPLKFGEVILWNESDCDHDKRIIL. Low complexity-rich tracts occupy residues 563–592 and 600–619; these read SRATSARTTPAGSSIGSRSSIQSRASAATS and GPSSRRTPSGTPQSSTSSRV. A disordered region spans residues 563-619; that stretch reads SRATSARTTPAGSSIGSRSSIQSRASAATSVSSNRFVGPSSRRTPSGTPQSSTSSRV.

Interacts (via N-terminus) with prg-1; the interaction is direct. May interact with edg-1. In terms of tissue distribution, expressed in germ cells.

Its subcellular location is the cytoplasmic granule. It localises to the cytoplasm. The protein resides in the perinuclear region. In terms of biological role, component of P-granules which is required for P-granule formation and integrity in adult germ cells. Promotes the accumulation of glh-1 mRNA and localization of pgl-1 to P-granules. Involved in RNA-mediated gene silencing (RNAi) in the germline. In particular, it is required for piwi-interacting RNA (piRNA) gene silencing and positively regulates the formation of secondary 22G-RNAs, which are RNA-dependent RNA polymerase-derived endo-siRNAs, typically 22 nucleotides in length with a 5'guanosine residue. Its role in RNAi may also be through positively regulating the expression of the dsRNA-binding protein rde-4. Plays a role in small RNA-directed transgenerational epigenetic inheritance. The polypeptide is P-granule-associated protein deps-1 (Caenorhabditis elegans).